The sequence spans 311 residues: Probable manganese-dependent inorganic pyrophosphatase (311 aa).

Residues His-9, Asp-13, Asp-15, Asp-75, His-97, and Asp-149 each contribute to the Mn(2+) site.

This sequence belongs to the PPase class C family. It depends on Mn(2+) as a cofactor.

The protein resides in the cytoplasm. The enzyme catalyses diphosphate + H2O = 2 phosphate + H(+). This is Probable manganese-dependent inorganic pyrophosphatase from Shouchella clausii (strain KSM-K16) (Alkalihalobacillus clausii).